Consider the following 185-residue polypeptide: Ribosome-recycling factor (185 aa).

The protein belongs to the RRF family.

The protein resides in the cytoplasm. In terms of biological role, responsible for the release of ribosomes from messenger RNA at the termination of protein biosynthesis. May increase the efficiency of translation by recycling ribosomes from one round of translation to another. This is Ribosome-recycling factor from Haemophilus influenzae (strain ATCC 51907 / DSM 11121 / KW20 / Rd).